The following is a 217-amino-acid chain: Lipid A acyltransferase PagP (217 aa).

The N-terminal stretch at 1-24 (MYLKRILITLSLITLPIVPCLSYA) is a signal peptide. Active-site residues include His-89, Asp-132, and Ser-133.

The protein belongs to the lipid A palmitoyltransferase family. Homodimer.

The protein resides in the cell outer membrane. It catalyses the reaction a lipid A + a 1,2-diacyl-sn-glycero-3-phosphocholine = a hepta-acyl lipid A + a 2-acyl-sn-glycero-3-phosphocholine. The enzyme catalyses a lipid IVA + a 1,2-diacyl-sn-glycero-3-phosphocholine = a lipid IVB + a 2-acyl-sn-glycero-3-phosphocholine. The catalysed reaction is a lipid IIA + a 1,2-diacyl-sn-glycero-3-phosphocholine = a lipid IIB + a 2-acyl-sn-glycero-3-phosphocholine. Functionally, transfers a fatty acid residue from the sn-1 position of a phospholipid to the N-linked hydroxyfatty acid chain on the proximal unit of lipid A or its precursors. The polypeptide is Lipid A acyltransferase PagP (Pectobacterium atrosepticum (strain SCRI 1043 / ATCC BAA-672) (Erwinia carotovora subsp. atroseptica)).